The following is a 375-amino-acid chain: Flagellin (375 aa).

The protein belongs to the bacterial flagellin family.

It is found in the secreted. Its subcellular location is the bacterial flagellum. In terms of biological role, flagellin is the subunit protein which polymerizes to form the filaments of bacterial flagella. Flagella are an important component in the invasiveness of B.bacilliformis. The protein is Flagellin of Bartonella bacilliformis.